The following is a 205-amino-acid chain: Methylthioribulose-1-phosphate dehydratase (205 aa).

Zn(2+) is bound by residues H94 and H96.

It belongs to the aldolase class II family. MtnB subfamily. Zn(2+) serves as cofactor.

The catalysed reaction is 5-(methylsulfanyl)-D-ribulose 1-phosphate = 5-methylsulfanyl-2,3-dioxopentyl phosphate + H2O. It participates in amino-acid biosynthesis; L-methionine biosynthesis via salvage pathway; L-methionine from S-methyl-5-thio-alpha-D-ribose 1-phosphate: step 2/6. Catalyzes the dehydration of methylthioribulose-1-phosphate (MTRu-1-P) into 2,3-diketo-5-methylthiopentyl-1-phosphate (DK-MTP-1-P). In Pectobacterium carotovorum subsp. carotovorum (strain PC1), this protein is Methylthioribulose-1-phosphate dehydratase.